The chain runs to 291 residues: ATP synthase gamma chain (291 aa).

Belongs to the ATPase gamma chain family. As to quaternary structure, F-type ATPases have 2 components, CF(1) - the catalytic core - and CF(0) - the membrane proton channel. CF(1) has five subunits: alpha(3), beta(3), gamma(1), delta(1), epsilon(1). CF(0) has three main subunits: a, b and c.

It is found in the cell inner membrane. In terms of biological role, produces ATP from ADP in the presence of a proton gradient across the membrane. The gamma chain is believed to be important in regulating ATPase activity and the flow of protons through the CF(0) complex. The protein is ATP synthase gamma chain of Sphingopyxis alaskensis (strain DSM 13593 / LMG 18877 / RB2256) (Sphingomonas alaskensis).